A 122-amino-acid chain; its full sequence is NADPH-dependent 7-cyano-7-deazaguanine reductase (122 aa).

The active-site Thioimide intermediate is Cys34. The active-site Proton donor is the Asp41. Substrate-binding positions include 56 to 58 (VEL) and 75 to 76 (HE).

Belongs to the GTP cyclohydrolase I family. QueF type 1 subfamily.

The protein resides in the cytoplasm. The catalysed reaction is 7-aminomethyl-7-carbaguanine + 2 NADP(+) = 7-cyano-7-deazaguanine + 2 NADPH + 3 H(+). Its pathway is tRNA modification; tRNA-queuosine biosynthesis. Catalyzes the NADPH-dependent reduction of 7-cyano-7-deazaguanine (preQ0) to 7-aminomethyl-7-deazaguanine (preQ1). In Anaeromyxobacter dehalogenans (strain 2CP-C), this protein is NADPH-dependent 7-cyano-7-deazaguanine reductase.